The sequence spans 73 residues: uncharacterized protein (73 aa).

The chain crosses the membrane as a helical span at residues 54–72 (VSFIVAPTVMQVQCLFFFI).

The protein resides in the membrane. This is an uncharacterized protein from Saccharomyces cerevisiae (strain ATCC 204508 / S288c) (Baker's yeast).